The following is a 276-amino-acid chain: Protein TabB (276 aa).

The protein belongs to the transferase hexapeptide repeat family. It depends on pyridoxal 5'-phosphate as a cofactor.

The chain is Protein TabB (tabB) from Pseudomonas amygdali pv. tabaci (Pseudomonas syringae pv. tabaci).